Here is a 206-residue protein sequence, read N- to C-terminus: MKPFTVLNGIAALLDRPNVDTDQIIPKQFLRKIERTGFGVHLFHDWRYLDDAGTKLNPEFSLNQERYKGASILLTRDNFGCGSSREHAPWALEDYGFRSIIAPSYADIFFNNCFKNGMLPVVLKSEEVEELFRSVSGNVGAKLQIDLDKQTVTGPTGKVYTFEVDSFRKYCLYNGLDDIGLTLKQGSKIGAFEKKQKEVEPWLYVI.

The protein belongs to the LeuD family. LeuD type 1 subfamily. Heterodimer of LeuC and LeuD.

The enzyme catalyses (2R,3S)-3-isopropylmalate = (2S)-2-isopropylmalate. It functions in the pathway amino-acid biosynthesis; L-leucine biosynthesis; L-leucine from 3-methyl-2-oxobutanoate: step 2/4. In terms of biological role, catalyzes the isomerization between 2-isopropylmalate and 3-isopropylmalate, via the formation of 2-isopropylmaleate. This Leptospira borgpetersenii serovar Hardjo-bovis (strain L550) protein is 3-isopropylmalate dehydratase small subunit.